The following is a 185-amino-acid chain: Protein GrpE (185 aa).

The segment at 1 to 44 (MSEEELTNGPGPEPQPEPLEVESAPLEAAPAGEPDKALLEAQQQ) is disordered.

This sequence belongs to the GrpE family. Homodimer.

The protein resides in the cytoplasm. Its function is as follows. Participates actively in the response to hyperosmotic and heat shock by preventing the aggregation of stress-denatured proteins, in association with DnaK and GrpE. It is the nucleotide exchange factor for DnaK and may function as a thermosensor. Unfolded proteins bind initially to DnaJ; upon interaction with the DnaJ-bound protein, DnaK hydrolyzes its bound ATP, resulting in the formation of a stable complex. GrpE releases ADP from DnaK; ATP binding to DnaK triggers the release of the substrate protein, thus completing the reaction cycle. Several rounds of ATP-dependent interactions between DnaJ, DnaK and GrpE are required for fully efficient folding. The sequence is that of Protein GrpE from Methylococcus capsulatus (strain ATCC 33009 / NCIMB 11132 / Bath).